A 147-amino-acid polypeptide reads, in one-letter code: Hemoglobin subunit beta-1 (147 aa).

One can recognise a Globin domain in the interval 3–147; sequence HWTDFERSTI…VVFSLGKQYH (145 aa). Heme b-binding residues include H64 and H93.

The protein belongs to the globin family. Hb1 is a heterotetramer of two alpha-1 chains and two beta-1 chains. As to expression, red blood cells.

Functionally, involved in oxygen transport from gills to the various peripheral tissues. This chain is Hemoglobin subunit beta-1, found in Liparis tunicatus (Kelp snailfish).